The chain runs to 465 residues: Fumarate hydratase class II (465 aa).

Residues 99-101 (SGT), Arg127, 130-133 (HPND), 140-142 (STN), and Thr188 contribute to the substrate site. The active-site Proton donor/acceptor is His189. Ser319 is a catalytic residue. Substrate is bound by residues Ser320 and 325–327 (KVN).

This sequence belongs to the class-II fumarase/aspartase family. Fumarase subfamily. In terms of assembly, homotetramer.

The protein localises to the cytoplasm. The enzyme catalyses (S)-malate = fumarate + H2O. The protein operates within carbohydrate metabolism; tricarboxylic acid cycle; (S)-malate from fumarate: step 1/1. Its function is as follows. Involved in the TCA cycle. Catalyzes the stereospecific interconversion of fumarate to L-malate. In Parasynechococcus marenigrum (strain WH8102), this protein is Fumarate hydratase class II.